A 564-amino-acid chain; its full sequence is MFS-type efflux transporter ffsH (564 aa).

Residues 1 to 18 show a composition bias toward basic and acidic residues; the sequence is MSEAEKKASQDAQHKEPM. The tract at residues 1-37 is disordered; sequence MSEAEKKASQDAQHKEPMADSETQLDSDSAPSSQAEK. The span at 21 to 35 shows a compositional bias: polar residues; it reads SETQLDSDSAPSSQA. 4 helical membrane-spanning segments follow: residues 43–63, 98–118, 131–151, and 157–177; these read YPLSFWLAFGALCLTGLISAM, YVMILATAIFLLGSGICGGAN, GIGAGGINMLVDLIICDLVPM, and FIGLLFLFVSIGTTSGPIIGG. N-linked (GlcNAc...) asparagine glycosylation is present at Asn-182. Transmembrane regions (helical) follow at residues 187 to 207, 226 to 246, 254 to 274, 300 to 320, 334 to 354, 362 to 382, 389 to 409, 427 to 447, and 502 to 522; these read WVFYINLPMGGAALVLLVLFL, VVGNAILVGATFSILYALTYG, AANIVAPFVLGFVGLGIFIAW, FFISFMTMILAFWVVYFYPVY, VHLLPFEVSFPIFAAVGGGLV, PIHMVATSIVTIAIGASSVLT, AWAVLQIFIGMGLGSLISTTL, TWAYMRSLGTIWGVSVPAAIF, and VWLVSIAFGAVTVLSTLFEKE. The interval 540–564 is disordered; the sequence is GDAKGDVERGEGQNDSREGGQNENV. Asn-553 carries an N-linked (GlcNAc...) asparagine glycan.

This sequence belongs to the major facilitator superfamily.

The protein resides in the cell membrane. MFS-type efflux transporter; part of the gene cluster that mediates the biosynthesis of the cytotoxic leucine-containing cytochalasans, including aspochalasin C, aspochalasin E, TMC-169, flavichalasine F, aspergillin PZ, aspochalasin M and flavichalasine G. FfsH might be involved in the excretion of cytochalasans. In Aspergillus flavipes, this protein is MFS-type efflux transporter ffsH.